Consider the following 324-residue polypeptide: Glyoxylate/hydroxypyruvate reductase B (324 aa).

Residues Arg237 and Glu266 contribute to the active site. His285 serves as the catalytic Proton donor.

This sequence belongs to the D-isomer specific 2-hydroxyacid dehydrogenase family. GhrB subfamily. As to quaternary structure, homodimer.

It localises to the cytoplasm. It carries out the reaction glycolate + NADP(+) = glyoxylate + NADPH + H(+). It catalyses the reaction (R)-glycerate + NAD(+) = 3-hydroxypyruvate + NADH + H(+). The catalysed reaction is (R)-glycerate + NADP(+) = 3-hydroxypyruvate + NADPH + H(+). Functionally, catalyzes the NADPH-dependent reduction of glyoxylate and hydroxypyruvate into glycolate and glycerate, respectively. This chain is Glyoxylate/hydroxypyruvate reductase B, found in Shigella boydii serotype 4 (strain Sb227).